Reading from the N-terminus, the 203-residue chain is Probable flagellin 1 (203 aa).

The propeptide occupies 1 to 6 (MRRRRG).

This sequence belongs to the archaeal flagellin family.

Its subcellular location is the archaeal flagellum. Flagellin is the subunit protein which polymerizes to form the filaments of archaeal flagella. The sequence is that of Probable flagellin 1 (flaB1) from Aeropyrum pernix (strain ATCC 700893 / DSM 11879 / JCM 9820 / NBRC 100138 / K1).